Here is a 477-residue protein sequence, read N- to C-terminus: MTKKLFIKTWGCQMNEYDSQKMADLLDSTHGYQVADTAEEADIILLNTCSIREKAQEKVFHQLGRWKNLKQDKPELIIGVGGCVASQEGQVIRQRAPFVDLVFGPQTLHRLPEMINQIKGGSSSVIDISFPEIEKFDRLPEPKAEGPTAFVSIMEGCSKYCTFCVVPYTRGEEVSRPVDDVLLEVAQLAEQGVREVNLLGQNVNAFRGPHHDGAICTFAELLEMVASIDGIDRIRYTTSHPVEFTDDIIDAYATIPELVDHLHLPVQSGSDRVLNLMKRGHTAIEYKSKIRKLRKIRPNLSMSSDFIIGFPGETDDDFEATMDLIQAMDFDLSFSFIYSARPGTPAADLPDDVSETTKKERLQLLQNRITQQALRIARNMIDSEQRVLVEGPSKKNPMELSGRTENNRVVNFEGTPDMIGGFVDVKITDVFANSLRGDVLRKEADMNLRINVAPQAILAKQTNKTDALGVAQFVPAH.

An MTTase N-terminal domain is found at 3–120 (KKLFIKTWGC…LPEMINQIKG (118 aa)). Positions 12, 49, 83, 157, 161, and 164 each coordinate [4Fe-4S] cluster. The Radical SAM core domain maps to 143 to 375 (KAEGPTAFVS…QNRITQQALR (233 aa)). The TRAM domain maps to 378 to 441 (RNMIDSEQRV…ANSLRGDVLR (64 aa)).

It belongs to the methylthiotransferase family. MiaB subfamily. In terms of assembly, monomer. [4Fe-4S] cluster is required as a cofactor.

It is found in the cytoplasm. It carries out the reaction N(6)-dimethylallyladenosine(37) in tRNA + (sulfur carrier)-SH + AH2 + 2 S-adenosyl-L-methionine = 2-methylsulfanyl-N(6)-dimethylallyladenosine(37) in tRNA + (sulfur carrier)-H + 5'-deoxyadenosine + L-methionine + A + S-adenosyl-L-homocysteine + 2 H(+). Functionally, catalyzes the methylthiolation of N6-(dimethylallyl)adenosine (i(6)A), leading to the formation of 2-methylthio-N6-(dimethylallyl)adenosine (ms(2)i(6)A) at position 37 in tRNAs that read codons beginning with uridine. This chain is tRNA-2-methylthio-N(6)-dimethylallyladenosine synthase, found in Pseudoalteromonas atlantica (strain T6c / ATCC BAA-1087).